The following is a 629-amino-acid chain: tRNA uridine 5-carboxymethylaminomethyl modification enzyme MnmG (629 aa).

Residues G13–G18, V125, and S180 contribute to the FAD site. G273–F287 provides a ligand contact to NAD(+). An FAD-binding site is contributed by Q370.

It belongs to the MnmG family. In terms of assembly, homodimer. Heterotetramer of two MnmE and two MnmG subunits. Requires FAD as cofactor.

The protein resides in the cytoplasm. NAD-binding protein involved in the addition of a carboxymethylaminomethyl (cmnm) group at the wobble position (U34) of certain tRNAs, forming tRNA-cmnm(5)s(2)U34. The sequence is that of tRNA uridine 5-carboxymethylaminomethyl modification enzyme MnmG from Sodalis glossinidius (strain morsitans).